The sequence spans 288 residues: Elongation factor Ts (288 aa).

Residues 82 to 85 are involved in Mg(2+) ion dislocation from EF-Tu; the sequence is TDFV.

This sequence belongs to the EF-Ts family.

It is found in the cytoplasm. Associates with the EF-Tu.GDP complex and induces the exchange of GDP to GTP. It remains bound to the aminoacyl-tRNA.EF-Tu.GTP complex up to the GTP hydrolysis stage on the ribosome. The chain is Elongation factor Ts from Chlorobaculum tepidum (strain ATCC 49652 / DSM 12025 / NBRC 103806 / TLS) (Chlorobium tepidum).